A 424-amino-acid polypeptide reads, in one-letter code: GTPase Obg (424 aa).

The region spanning 1–158 is the Obg domain; that stretch reads MFVDKARIFV…RWISLELKLL (158 aa). Positions 159-331 constitute an OBG-type G domain; it reads ADVGLIGFPN…LLKECARVLS (173 aa). GTP is bound by residues 165-172, 190-194, 212-215, 282-285, and 312-314; these read GFPNVGKS, FTTIT, DIPG, NKAD, and SAA. Residues serine 172 and threonine 192 each coordinate Mg(2+). Residues 345-424 enclose the OCT domain; that stretch reads RFVPEDKHFT…LNDFEFEFLK (80 aa).

It belongs to the TRAFAC class OBG-HflX-like GTPase superfamily. OBG GTPase family. In terms of assembly, monomer. Mg(2+) is required as a cofactor.

It localises to the cytoplasm. In terms of biological role, an essential GTPase which binds GTP, GDP and possibly (p)ppGpp with moderate affinity, with high nucleotide exchange rates and a fairly low GTP hydrolysis rate. Plays a role in control of the cell cycle, stress response, ribosome biogenesis and in those bacteria that undergo differentiation, in morphogenesis control. In Clostridium acetobutylicum (strain ATCC 824 / DSM 792 / JCM 1419 / IAM 19013 / LMG 5710 / NBRC 13948 / NRRL B-527 / VKM B-1787 / 2291 / W), this protein is GTPase Obg.